Reading from the N-terminus, the 205-residue chain is Small ribosomal subunit protein uS4 (205 aa).

Positions 18-49 (NIWGRPKSPVNKREYGPGQHGQRRKGKLSDFG) are disordered. An S4 RNA-binding domain is found at 94–157 (RRLDTVVYRA…KQLALVLEAN (64 aa)).

It belongs to the universal ribosomal protein uS4 family. As to quaternary structure, part of the 30S ribosomal subunit. Contacts protein S5. The interaction surface between S4 and S5 is involved in control of translational fidelity.

Functionally, one of the primary rRNA binding proteins, it binds directly to 16S rRNA where it nucleates assembly of the body of the 30S subunit. With S5 and S12 plays an important role in translational accuracy. This Nitrobacter winogradskyi (strain ATCC 25391 / DSM 10237 / CIP 104748 / NCIMB 11846 / Nb-255) protein is Small ribosomal subunit protein uS4.